The sequence spans 1545 residues: ATP-binding cassette sub-family C member 2 (1545 aa).

Residues 1-27 (MLEKFCNSTFWNSSFLDSPEADLPLCF) are Extracellular-facing. N-linked (GlcNAc...) asparagine glycosylation is found at N7 and N12. The chain crosses the membrane as a helical span at residues 28-48 (EQTVLVWIPLGYLWLLAPWQL). At 49-68 (LHVYKSRTKRSSTTKLYLAK) the chain is on the cytoplasmic side. A helical membrane pass occupies residues 69 to 89 (QVFVGFLLILAAIELALVLTE). Residues 90 to 93 (DSGQ) are Extracellular-facing. A helical membrane pass occupies residues 94-114 (ATVPAVRYTNPSLYLGTWLLV). At 115 to 126 (LLIQYSRQWCVQ) the chain is on the cytoplasmic side. A helical transmembrane segment spans residues 127 to 147 (KNSWFLSLFWILSILCGTFQF). The Extracellular portion of the chain corresponds to 148 to 165 (QTLIRTLLQGDNSNLAYS). A helical transmembrane segment spans residues 166–186 (CLFFISYGFQILILIFSAFSE). Residues 187 to 313 (NNESSNNPSS…DVPKSWLMKA (127 aa)) are Cytoplasmic-facing. A disordered region spans residues 253–284 (ARRALQRRQEKSSQQNSGARLPGLNKNQSQSQ). Phosphoserine occurs at positions 281 and 283. A helical transmembrane segment spans residues 314–334 (LFKTFYMVLLKSFLLKLVNDI). The ABC transmembrane type-1 1 domain occupies 322–605 (LLKSFLLKLV…LPMMISSMLQ (284 aa)). Topologically, residues 335-360 (FTFVSPQLLKLLISFASDRDTYLWIG) are extracellular. A helical transmembrane segment spans residues 361–381 (YLCAILLFTAALIQSFCLQCY). Over 382-437 (FQLCFKLGVKVRTAIMASVYKKALTLSNLARKEYTVGETVNLMSVDAQKLMDVTNF) the chain is Cytoplasmic. The helical transmembrane segment at 438-458 (MHMLWSSVLQIVLSIFFLWRE) threads the bilayer. Residues 459–461 (LGP) lie on the Extracellular side of the membrane. A helical transmembrane segment spans residues 462-482 (SVLAGVGVMVLVIPINAILST). At 483 to 544 (KSKTIQVKNM…NLLAFSQLQC (62 aa)) the chain is on the cytoplasmic side. Residues 545–565 (VVIFVFQLTPVLVSVVTFSVY) form a helical membrane-spanning segment. Over 566–587 (VLVDSNNILDAQKAFTSITLFN) the chain is Extracellular. Residues 588 to 608 (ILRFPLSMLPMMISSMLQASV) form a helical membrane-spanning segment. At 609-971 (STERLEKYLG…VKFSIYLEYL (363 aa)) the chain is on the cytoplasmic side. The ABC transporter 1 domain maps to 637–861 (MQFSEASFTW…KGEFAKNLKT (225 aa)). 671–678 (GPVGSGKS) is an ATP binding site. Phosphoserine occurs at positions 878, 926, 930, and 938. A helical transmembrane segment spans residues 972–992 (QAIGLFSIFFIILAFVMNSVA). The 286-residue stretch at 979–1264 (IFFIILAFVM…LVRMTSEIET (286 aa)) folds into the ABC transmembrane type-1 2 domain. The Extracellular portion of the chain corresponds to 993 to 1033 (FIGSNLWLSAWTSDSKIFNSTDYPASQRDMRVGVYGALGLA). N1011 is a glycosylation site (N-linked (GlcNAc...) asparagine). Residues 1034–1054 (QGIFVFIAHFWSAFGFVHASN) traverse the membrane as a helical segment. Residues 1055-1097 (ILHKQLLNNILRAPMRFFDTTPTGRIVNRFAGDISTVDDTLPQ) are Cytoplasmic-facing. The helical transmembrane segment at 1098-1118 (SLRSWITCFLGIISTLVMICM) threads the bilayer. A topological domain (extracellular) is located at residue A1119. A helical transmembrane segment spans residues 1120-1140 (TPVFTIIVIPLGIIYVSVQMF). Topologically, residues 1141–1211 (YVSTSRQLRR…TSNRWLAIRL (71 aa)) are cytoplasmic. Residues 1212-1232 (ELVGNLTVFFSALMMVIYRDT) form a helical membrane-spanning segment. Residues 1233–1234 (LS) are Extracellular-facing. A helical membrane pass occupies residues 1235-1255 (GDTVGFVLSNALNITQTLNWL). At 1256–1545 (VRMTSEIETN…GIENVNSTKF (290 aa)) the chain is on the cytoplasmic side. The 235-residue stretch at 1300-1534 (IQFNNYQVRY…PGPFYFMAKE (235 aa)) folds into the ABC transporter 2 domain. 1334–1341 (GRTGAGKS) serves as a coordination point for ATP. Phosphoserine is present on S1438.

It belongs to the ABC transporter superfamily. ABCC family. Conjugate transporter (TC 3.A.1.208) subfamily. In terms of tissue distribution, expressed by polarized cells in liver, kidney and intestine. The highest expression is found in liver. Expressed in small intestine.

It is found in the apical cell membrane. The enzyme catalyses ATP + H2O + xenobioticSide 1 = ADP + phosphate + xenobioticSide 2.. It catalyses the reaction an S-substituted glutathione(in) + ATP + H2O = an S-substituted glutathione(out) + ADP + phosphate + H(+). The catalysed reaction is taurolithocholate 3-sulfate(in) + ATP + H2O = taurolithocholate 3-sulfate(out) + ADP + phosphate + H(+). It carries out the reaction leukotriene C4(in) + ATP + H2O = leukotriene C4(out) + ADP + phosphate + H(+). The enzyme catalyses 17beta-estradiol 17-O-(beta-D-glucuronate)(in) + ATP + H2O = 17beta-estradiol 17-O-(beta-D-glucuronate)(out) + ADP + phosphate + H(+). It catalyses the reaction (4Z,15Z)-bilirubin IXalpha C8-beta-D-glucuronoside(in) + ATP + H2O = (4Z,15Z)-bilirubin IXalpha C8-beta-D-glucuronoside(out) + ADP + phosphate + H(+). The catalysed reaction is (4Z,15Z)-bilirubin IXalpha C8,C12-beta-D-bisglucuronoside(in) + ATP + H2O = (4Z,15Z)-bilirubin IXalpha C8,C12-beta-D-bisglucuronoside(out) + ADP + phosphate + H(+). ATP-dependent transporter of the ATP-binding cassette (ABC) family that binds and hydrolyzes ATP to enable active transport of various substrates including many drugs, toxicants and endogenous compound across cell membranes. Transports a wide variety of conjugated organic anions such as sulfate-, glucuronide- and glutathione (GSH)-conjugates of endo- and xenobiotics substrates. Mediates hepatobiliary excretion of mono- and bis-glucuronidated bilirubin molecules and therefore play an important role in bilirubin detoxification. Also mediates hepatobiliary excretion of others glucuronide conjugates such as 17beta-estradiol 17-glucosiduronic acid and leukotriene C4. Transports sulfated bile salt such as taurolithocholate sulfate. Transports various anticancer drugs, such as anthracycline, vinca alkaloid and methotrexate and HIV-drugs such as protease inhibitors. Confers resistance to several anti-cancer drugs including cisplatin, doxorubicin, epirubicin, methotrexate, etoposide and vincristine. This chain is ATP-binding cassette sub-family C member 2, found in Homo sapiens (Human).